Consider the following 596-residue polypeptide: Protein Malvolio (596 aa).

The interval 1-34 (MSSNEAYHEPGAGGDGPGGSSGASGGGSQRSNQL) is disordered. Residues 11–28 (GAGGDGPGGSSGASGGGS) show a composition bias toward gly residues. Residue asparagine 41 is glycosylated (N-linked (GlcNAc...) asparagine). 7 consecutive transmembrane segments (helical) span residues 77 to 97 (LWAF…PGNI), 105 to 125 (AAAK…GLLM), 154 to 174 (WILW…EVIG), 186 to 206 (VVPL…FLFL), 216 to 236 (FLFG…YIVS), 263 to 283 (AVGV…SALV), and 309 to 329 (VALF…AHGM). Residue asparagine 359 is glycosylated (N-linked (GlcNAc...) asparagine). 5 helical membrane passes run 373 to 393 (LFLG…GILA), 424 to 444 (VLVT…FSKM), 463 to 483 (PFAA…GEFV), 490 to 510 (IVSI…VVVQ), and 520 to 540 (LLAL…YLVI). A glycan (N-linked (GlcNAc...) asparagine) is linked at asparagine 574.

It belongs to the NRAMP family. Expressed in macrophages and in the nervous system.

The protein resides in the membrane. Functionally, putative transporter required for normal taste behavior. May be a nitrite/nitrate transporter. The sequence is that of Protein Malvolio (Mvl) from Drosophila melanogaster (Fruit fly).